We begin with the raw amino-acid sequence, 433 residues long: Voltage-gated potassium channel regulatory subunit KCNG3 (433 aa).

The Cytoplasmic portion of the chain corresponds to 1–165 (MTFGRGGAAS…RTFEEPTSSL (165 aa)). A helical transmembrane segment spans residues 166 to 187 (AAQILASVSVVFVIVSMVVLCA). At 188–217 (STLPDWRAAVADNRSLDDRSRYSASPGREP) the chain is on the extracellular side. Residues 218–239 (SGIIEAICIGWFTAECIVRFIV) form a helical membrane-spanning segment. Residues 240 to 250 (SKNKCEFVKRP) are Cytoplasmic-facing. The helical transmembrane segment at 251-271 (LNIIDLLAITPYYISVLMTVF) threads the bilayer. The Extracellular portion of the chain corresponds to 272-281 (TGENSQLQRA). Residues 282 to 302 (GVTLRVLRMMRIFWVIKLARH) traverse the membrane as a helical; Voltage-sensor segment. The Cytoplasmic portion of the chain corresponds to 303 to 317 (FIGLQTLGLTLKRCY). The chain crosses the membrane as a helical span at residues 318–339 (REMAMLLVFICVAMAIFSALSQ). Over 340 to 357 (LLEHGLDLETSNKDFASI) the chain is Extracellular. The helical intramembrane region spans 358–369 (PAACWWVIISMT). The Selectivity filter signature appears at 370–375 (TVGYGD). An intramembrane segment occupies 370–377 (TVGYGDMY). Over 378–384 (PITVPGR) the chain is Extracellular. A helical transmembrane segment spans residues 385-413 (ILGGVCVVSGIVLLALPITFIYHSFVQCY). Residues 414–433 (HELKFRSARYSRSLSAEFLN) lie on the Cytoplasmic side of the membrane.

The protein belongs to the potassium channel family. G (TC 1.A.1.2) subfamily. Kv6.3/KCNG3 sub-subfamily. In terms of assembly, heterotetramer with KCNB1. Does not form homomultimers.

The protein resides in the cell membrane. It localises to the cytoplasm. In terms of biological role, regulatory subunit of the voltage-gated potassium (Kv) channel which, when coassembled with KCNB1, modulates the kinetics parameters of the heterotetrameric channel namely the inactivation and deactivation rate. Potassium channel subunit that does not form functional channels by itself. Reduces the deactivation rate. Moderately acceleratee activation. The chain is Voltage-gated potassium channel regulatory subunit KCNG3 from Mus musculus (Mouse).